Reading from the N-terminus, the 465-residue chain is Ras-like GTPase YcjX (465 aa).

A Walker A motif motif is present at residues glycine 26–threonine 33. GTP is bound by residues serine 28, glycine 31, lysine 32, threonine 33, alanine 34, tryptophan 95, threonine 99, and arginine 100. Residues glycine 31, lysine 32, threonine 33, alanine 34, tryptophan 95, and threonine 99 each contribute to the GDP site. Lysine 249 bears the N6-acetyllysine mark. Residues lysine 338, aspartate 340, histidine 341, and valine 380 each coordinate GTP. GDP contacts are provided by lysine 338, aspartate 340, histidine 341, and valine 380.

To H.influenzae HI_1637. Monomer in solution. Mg(2+) serves as cofactor.

It carries out the reaction GTP + H2O = GDP + phosphate + H(+). Alternates between an inactive form bound to GDP and an active form bound to GTP. Likely activated by a guanine nucleotide-exchange factor (GEF). Functionally, binds GTP and GDP. Has intrinsic GTPase activity. Does not hydrolyze ATP. May act as a transducer of stress responses. In Escherichia coli (strain K12), this protein is Ras-like GTPase YcjX (ycjX).